A 469-amino-acid chain; its full sequence is Ribulose bisphosphate carboxylase large chain (469 aa).

Residues Asn-115 and Thr-165 each coordinate substrate. Residue Lys-167 is the Proton acceptor of the active site. A substrate-binding site is contributed by Lys-169. Lys-193, Asp-195, and Glu-196 together coordinate Mg(2+). Lys-193 carries the post-translational modification N6-carboxylysine. His-286 serves as the catalytic Proton acceptor. Residues Arg-287, His-319, and Ser-371 each coordinate substrate.

It belongs to the RuBisCO large chain family. Type I subfamily. Heterohexadecamer of 8 large chains and 8 small chains. Mg(2+) is required as a cofactor.

Its subcellular location is the plastid. It localises to the organellar chromatophore. The catalysed reaction is 2 (2R)-3-phosphoglycerate + 2 H(+) = D-ribulose 1,5-bisphosphate + CO2 + H2O. It carries out the reaction D-ribulose 1,5-bisphosphate + O2 = 2-phosphoglycolate + (2R)-3-phosphoglycerate + 2 H(+). Functionally, ruBisCO catalyzes two reactions: the carboxylation of D-ribulose 1,5-bisphosphate, the primary event in carbon dioxide fixation, as well as the oxidative fragmentation of the pentose substrate. Both reactions occur simultaneously and in competition at the same active site. The sequence is that of Ribulose bisphosphate carboxylase large chain from Paulinella chromatophora.